An 887-amino-acid polypeptide reads, in one-letter code: Phosphatidylinositol 3-kinase catalytic subunit type 3 (887 aa).

In terms of domain architecture, C2 PI3K-type spans 35–184; it reads YKAVLEDPML…LAKLTKAHRQ (150 aa). The disordered stretch occupies residues 149-170; it reads VEADGSEPTRTPGRTSSTLSED. Residues 156–170 show a composition bias toward polar residues; the sequence is PTRTPGRTSSTLSED. At Thr163 the chain carries Phosphothreonine; by AMPK. Ser165 carries the phosphoserine; by AMPK modification. Phosphoserine occurs at positions 244, 261, and 282. Positions 283–520 constitute a PIK helical domain; the sequence is DHDLKPNATT…PKTHEMYLNV (238 aa). A disordered region spans residues 416–467; that stretch reads EPTKKDSQASVSESLSSSGVSSADIDSSQIITNPLPPVASPPPASKSKEVSD. The span at 423-444 shows a compositional bias: low complexity; that stretch reads QASVSESLSSSGVSSADIDSSQ. Over residues 449-459 the composition is skewed to pro residues; sequence PLPPVASPPPA. One can recognise a PI3K/PI4K catalytic domain in the interval 605–871; the sequence is IPETATLFKS…LIDESVHALF (267 aa). Positions 611-617 are G-loop; it reads LFKSALM. The tract at residues 740 to 748 is catalytic loop; the sequence is GVGDRHLDN. The segment at 759-780 is activation loop; it reads HIDFGYILGRDPKPLPPPMKLN.

The protein belongs to the PI3/PI4-kinase family. Component of the PI3K (PI3KC3/PI3K-III/class III phosphatidylinositol 3-kinase) complex the core of which is composed of the catalytic subunit PIK3C3, the regulatory subunit PIK3R4 and BECN1 associating with additional regulatory/auxiliary subunits to form alternative complex forms. Alternative complex forms containing a fourth regulatory subunit in a mutually exclusive manner are: the PI3K complex I (PI3KC3-C1) containing ATG14, and the PI3K complex II (PI3KC3-C2) containing UVRAG. PI3KC3-C1 displays a V-shaped architecture with PIK3R4 serving as a bridge between PIK3C3 and the ATG14:BECN1 subcomplex. Both, PI3KC3-C1 and PI3KC3-C2, can associate with further regulatory subunits such as RUBCN, SH3GLB1/Bif-1 and AMBRA1. PI3KC3-C1 probably associates with PIK3CB. Interacts with RAB7A in the presence of PIK3R4. Interacts with AMBRA1. Interacts with BECN1P1/BECN2. Interacts with SLAMF1. May interact with DYN2. May be a component of a complex composed of RAB5A (in GDP-bound form), DYN2 and PIK3C3. Interacts with NCKAP1L. Interacts with ATG14; this interaction is increased in the absence of TMEM39A. Interacts with STEEP1; the interaction is STING1-dependent and required for trafficking of STING1 from the endoplasmic reticulum. Interacts with YWHAG. Interacts with ARMC3. It depends on Mn(2+) as a cofactor. In terms of processing, ubiquitinated via 'Lys-29'- and 'Lys-48'-linked ubiquitination by UBE3C, promoting its degradation. Deubiquitination by ZRANB1/TRABID promotes its stabilization, leading to autophagosome maturation.

The protein localises to the midbody. It is found in the late endosome. Its subcellular location is the cytoplasmic vesicle. The protein resides in the autophagosome. The catalysed reaction is a 1,2-diacyl-sn-glycero-3-phospho-(1D-myo-inositol) + ATP = a 1,2-diacyl-sn-glycero-3-phospho-(1D-myo-inositol-3-phosphate) + ADP + H(+). Its function is as follows. Catalytic subunit of the PI3K complex that mediates formation of phosphatidylinositol 3-phosphate; different complex forms are believed to play a role in multiple membrane trafficking pathways: PI3KC3-C1 is involved in initiation of autophagosomes and PI3KC3-C2 in maturation of autophagosomes and endocytosis. As part of PI3KC3-C1, promotes endoplasmic reticulum membrane curvature formation prior to vesicle budding. Involved in regulation of degradative endocytic trafficking and required for the abscission step in cytokinesis, probably in the context of PI3KC3-C2. Involved in the transport of lysosomal enzyme precursors to lysosomes. Required for transport from early to late endosomes. The protein is Phosphatidylinositol 3-kinase catalytic subunit type 3 of Rattus norvegicus (Rat).